The primary structure comprises 377 residues: N-acetyldiaminopimelate deacetylase (377 aa).

D69 is an active-site residue. The active-site Proton acceptor is the E128.

Belongs to the peptidase M20A family. N-acetyldiaminopimelate deacetylase subfamily.

It carries out the reaction N-acetyl-(2S,6S)-2,6-diaminopimelate + H2O = (2S,6S)-2,6-diaminopimelate + acetate. It functions in the pathway amino-acid biosynthesis; L-lysine biosynthesis via DAP pathway; LL-2,6-diaminopimelate from (S)-tetrahydrodipicolinate (acetylase route): step 3/3. In terms of biological role, catalyzes the conversion of N-acetyl-diaminopimelate to diaminopimelate and acetate. The protein is N-acetyldiaminopimelate deacetylase of Brevibacillus brevis (strain 47 / JCM 6285 / NBRC 100599).